The chain runs to 207 residues: Large ribosomal subunit protein uL4 (207 aa).

Residues 47–78 (GTHKVKNRSEVRGGGRKPWRQKGTGRARQGSI) are disordered. A compositionally biased stretch (basic residues) spans 60–71 (GGRKPWRQKGTG).

This sequence belongs to the universal ribosomal protein uL4 family. In terms of assembly, part of the 50S ribosomal subunit.

Its function is as follows. One of the primary rRNA binding proteins, this protein initially binds near the 5'-end of the 23S rRNA. It is important during the early stages of 50S assembly. It makes multiple contacts with different domains of the 23S rRNA in the assembled 50S subunit and ribosome. Forms part of the polypeptide exit tunnel. In Listeria innocua serovar 6a (strain ATCC BAA-680 / CLIP 11262), this protein is Large ribosomal subunit protein uL4.